A 259-amino-acid chain; its full sequence is Aminoglycoside 3'-phosphotransferase (259 aa).

The Proton acceptor role is filled by Asp-187.

Belongs to the aminoglycoside phosphotransferase family.

It carries out the reaction kanamycin A + ATP = kanamycin 3'-phosphate + ADP + H(+). In terms of biological role, resistance to kanamycin and structurally-related aminoglycosides, including amikacin. This Acinetobacter baumannii protein is Aminoglycoside 3'-phosphotransferase (aphA-6).